We begin with the raw amino-acid sequence, 547 residues long: Chaperonin GroEL (547 aa).

ATP is bound by residues Thr30 to Pro33, Lys51, Asp87 to Thr91, Gly415, Asn479 to Ala481, and Asp495.

This sequence belongs to the chaperonin (HSP60) family. Forms a cylinder of 14 subunits composed of two heptameric rings stacked back-to-back. Interacts with the co-chaperonin GroES.

Its subcellular location is the cytoplasm. It catalyses the reaction ATP + H2O + a folded polypeptide = ADP + phosphate + an unfolded polypeptide.. Together with its co-chaperonin GroES, plays an essential role in assisting protein folding. The GroEL-GroES system forms a nano-cage that allows encapsulation of the non-native substrate proteins and provides a physical environment optimized to promote and accelerate protein folding. This Delftia acidovorans (strain DSM 14801 / SPH-1) protein is Chaperonin GroEL.